The primary structure comprises 211 residues: MELADIRREYTKGGLRRKDLKADPIDQFNLWLEQAIKAGLTDPTAMTVATVDENGMPFQRIVLLKNVDKDGFVFYTNLGSRKAQHLEHNSNISLHFPWHPLERQVHITGVAEKLTAMENMKYFTSRPKDSQLAAIASKQSSRISARGVLEGKFLELKQKFAKGEIPMPTFWGGFRVKPQSIEFWQGGEHRLHDRFLFSQHDGEWDIDRLAP.

Residues 7-10 (RREY) and lysine 65 each bind substrate. FMN-binding positions include 60 to 65 (RIVLLK), 75 to 76 (YT), arginine 81, lysine 82, and glutamine 104. Tyrosine 122, arginine 126, and serine 130 together coordinate substrate. FMN contacts are provided by residues 139-140 (QS) and tryptophan 184. 190 to 192 (RLH) contacts substrate. Arginine 194 provides a ligand contact to FMN.

It belongs to the pyridoxamine 5'-phosphate oxidase family. As to quaternary structure, homodimer. FMN serves as cofactor.

The enzyme catalyses pyridoxamine 5'-phosphate + O2 + H2O = pyridoxal 5'-phosphate + H2O2 + NH4(+). The catalysed reaction is pyridoxine 5'-phosphate + O2 = pyridoxal 5'-phosphate + H2O2. Its pathway is cofactor metabolism; pyridoxal 5'-phosphate salvage; pyridoxal 5'-phosphate from pyridoxamine 5'-phosphate: step 1/1. It functions in the pathway cofactor metabolism; pyridoxal 5'-phosphate salvage; pyridoxal 5'-phosphate from pyridoxine 5'-phosphate: step 1/1. In terms of biological role, catalyzes the oxidation of either pyridoxine 5'-phosphate (PNP) or pyridoxamine 5'-phosphate (PMP) into pyridoxal 5'-phosphate (PLP). The chain is Pyridoxine/pyridoxamine 5'-phosphate oxidase from Vibrio parahaemolyticus serotype O3:K6 (strain RIMD 2210633).